Here is a 398-residue protein sequence, read N- to C-terminus: Acetate kinase (398 aa).

Mg(2+) is bound at residue N9. K16 provides a ligand contact to ATP. R93 lines the substrate pocket. D150 acts as the Proton donor/acceptor in catalysis. Residues 209 to 213 (HLGAG), 284 to 286 (DMR), and 329 to 333 (GIGEH) each bind ATP. Residue E382 coordinates Mg(2+).

This sequence belongs to the acetokinase family. As to quaternary structure, homodimer. Requires Mg(2+) as cofactor. The cofactor is Mn(2+).

The protein resides in the cytoplasm. The enzyme catalyses acetate + ATP = acetyl phosphate + ADP. It functions in the pathway metabolic intermediate biosynthesis; acetyl-CoA biosynthesis; acetyl-CoA from acetate: step 1/2. Catalyzes the formation of acetyl phosphate from acetate and ATP. Can also catalyze the reverse reaction. The sequence is that of Acetate kinase from Rhodopseudomonas palustris (strain ATCC BAA-98 / CGA009).